Here is a 1070-residue protein sequence, read N- to C-terminus: Carbamoyl phosphate synthase large chain (1070 aa).

The carboxyphosphate synthetic domain stretch occupies residues 1 to 401; that stretch reads MPKRDDIKTI…ALLKAVRSLE (401 aa). The ATP site is built by Arg129, Arg169, Gly175, Gly176, Lys208, Ile210, Glu215, Gly241, Ile242, His243, Gln284, and Glu298. The 195-residue stretch at 133–327 folds into the ATP-grasp 1 domain; that stretch reads RDLMNELGEP…IAKLAAKIAV (195 aa). Mg(2+) contacts are provided by Gln284, Glu298, and Asn300. Residues Gln284, Glu298, and Asn300 each contribute to the Mn(2+) site. The interval 402-546 is oligomerization domain; it reads IGADHLLLEE…YSTYEEENES (145 aa). Positions 547 to 929 are carbamoyl phosphate synthetic domain; the sequence is TRSAKESVIV…ALYKGFVASG (383 aa). The ATP-grasp 2 domain maps to 671-861; that stretch reads EKALEILQIP…MANVATRVIL (191 aa). ATP is bound by residues Arg707, Arg746, Val748, Glu752, Gly777, Val778, His779, Ser780, Gln820, and Glu832. Mg(2+) is bound by residues Gln820, Glu832, and Asn834. Residues Gln820, Glu832, and Asn834 each coordinate Mn(2+). The MGS-like domain maps to 930-1070; it reads TTMHDYGTVL…SEVKQPKARV (141 aa). Residues 930–1070 form an allosteric domain region; it reads TTMHDYGTVL…SEVKQPKARV (141 aa).

The protein belongs to the CarB family. In terms of assembly, composed of two chains; the small (or glutamine) chain promotes the hydrolysis of glutamine to ammonia, which is used by the large (or ammonia) chain to synthesize carbamoyl phosphate. Tetramer of heterodimers (alpha,beta)4. Mg(2+) is required as a cofactor. The cofactor is Mn(2+).

The catalysed reaction is hydrogencarbonate + L-glutamine + 2 ATP + H2O = carbamoyl phosphate + L-glutamate + 2 ADP + phosphate + 2 H(+). It carries out the reaction hydrogencarbonate + NH4(+) + 2 ATP = carbamoyl phosphate + 2 ADP + phosphate + 2 H(+). It functions in the pathway amino-acid biosynthesis; L-arginine biosynthesis; carbamoyl phosphate from bicarbonate: step 1/1. It participates in pyrimidine metabolism; UMP biosynthesis via de novo pathway; (S)-dihydroorotate from bicarbonate: step 1/3. In terms of biological role, large subunit of the glutamine-dependent carbamoyl phosphate synthetase (CPSase). CPSase catalyzes the formation of carbamoyl phosphate from the ammonia moiety of glutamine, carbonate, and phosphate donated by ATP, constituting the first step of 2 biosynthetic pathways, one leading to arginine and/or urea and the other to pyrimidine nucleotides. The large subunit (synthetase) binds the substrates ammonia (free or transferred from glutamine from the small subunit), hydrogencarbonate and ATP and carries out an ATP-coupled ligase reaction, activating hydrogencarbonate by forming carboxy phosphate which reacts with ammonia to form carbamoyl phosphate. This Listeria monocytogenes serotype 4a (strain HCC23) protein is Carbamoyl phosphate synthase large chain.